A 364-amino-acid chain; its full sequence is Alpha-2-HS-glycoprotein (364 aa).

The or 17 signal peptide spans 1–15 (MKSFLLLFCLAQLCS). A Cystatin fetuin-A-type 1 domain is found at 27–133 (YKEPACDDPD…QFSVLFTKCD (107 aa)). 6 disulfides stabilise this stretch: cysteine 32/cysteine 355, cysteine 89/cysteine 100, cysteine 114/cysteine 132, cysteine 146/cysteine 149, cysteine 208/cysteine 219, and cysteine 230/cysteine 248. An N-linked (GlcNAc...) asparagine glycan is attached at asparagine 99. Residues serine 134, serine 135, and serine 138 each carry the phosphoserine modification. The 113-residue stretch at 144 to 256 (KLCPDCPLLA…TCTLFQTQPV (113 aa)) folds into the Cystatin fetuin-A-type 2 domain. 2 N-linked (GlcNAc...) asparagine glycosylation sites follow: asparagine 156 and asparagine 176. Serine 301 carries an O-linked (GalNAc...) serine glycan. A Phosphothreonine modification is found at threonine 319. Phosphoserine occurs at positions 321, 325, 328, and 330. O-linked (GalNAc...) threonine glycosylation occurs at threonine 339.

Belongs to the fetuin family. In terms of processing, phosphorylated by FAM20C in the extracellular medium.

It localises to the secreted. The sequence is that of Alpha-2-HS-glycoprotein (AHSG) from Ovis aries (Sheep).